Reading from the N-terminus, the 98-residue chain is MPPIFANIILAFATAFLGTLIFRSHLMSSLLCLEGMMLSMFILSTLIILNMHLTVSFMMPILLLVFAACEAAIGLALLVMVSNTYGLDYIKNLNLLQC.

3 helical membrane passes run 2-22 (PPIFANIILAFATAFLGTLIF), 29-49 (SLLCLEGMMLSMFILSTLIIL), and 61-81 (ILLLVFAACEAAIGLALLVMV).

Belongs to the complex I subunit 4L family. Core subunit of respiratory chain NADH dehydrogenase (Complex I) which is composed of 45 different subunits.

The protein resides in the mitochondrion inner membrane. It catalyses the reaction a ubiquinone + NADH + 5 H(+)(in) = a ubiquinol + NAD(+) + 4 H(+)(out). Its function is as follows. Core subunit of the mitochondrial membrane respiratory chain NADH dehydrogenase (Complex I) which catalyzes electron transfer from NADH through the respiratory chain, using ubiquinone as an electron acceptor. Part of the enzyme membrane arm which is embedded in the lipid bilayer and involved in proton translocation. This chain is NADH-ubiquinone oxidoreductase chain 4L (MT-ND4L), found in Avahi unicolor (Sambirano woolly lemur).